The chain runs to 208 residues: MYDDLTSKQIEILKFIKRYIDYKGYPPAIREIGDSLNINSTSTVHNNILKLEMKGYLRRDPLKNRALEIIDSVYEEQENEIKKETIDVPIVGKVQAGMPILAIENVEDTFPLPIEYTSQGIVFILKVQGESMIEDGILNGDKIIVRKQNTANNGDIVVALMDESATVKRFYRHSDHIELRPSNSTMYPIIVKDVEILGKVIGLYRTIY.

A DNA-binding region (H-T-H motif) is located at residues 29–49 (IREIGDSLNINSTSTVHNNIL). Catalysis depends on for autocatalytic cleavage activity residues Ser131 and Lys168.

Belongs to the peptidase S24 family. In terms of assembly, homodimer.

The enzyme catalyses Hydrolysis of Ala-|-Gly bond in repressor LexA.. In terms of biological role, represses a number of genes involved in the response to DNA damage (SOS response), including recA and lexA. In the presence of single-stranded DNA, RecA interacts with LexA causing an autocatalytic cleavage which disrupts the DNA-binding part of LexA, leading to derepression of the SOS regulon and eventually DNA repair. This chain is LexA repressor, found in Finegoldia magna (strain ATCC 29328 / DSM 20472 / WAL 2508) (Peptostreptococcus magnus).